We begin with the raw amino-acid sequence, 106 residues long: Large ribosomal subunit protein uL24 (106 aa).

This sequence belongs to the universal ribosomal protein uL24 family. In terms of assembly, part of the 50S ribosomal subunit.

Its function is as follows. One of two assembly initiator proteins, it binds directly to the 5'-end of the 23S rRNA, where it nucleates assembly of the 50S subunit. One of the proteins that surrounds the polypeptide exit tunnel on the outside of the subunit. The sequence is that of Large ribosomal subunit protein uL24 from Gluconobacter oxydans (strain 621H) (Gluconobacter suboxydans).